The primary structure comprises 353 residues: MTIALGKSSKEEKTLFDTVDDWLRRDRFVFVGWSGLLLFPCAYFALGGWFTGTTFVTSWYTHGLASSYLEGCNFLTAAVSTPANSLAHSLLLLWGPEAQGDLTRWCQLGGLWTFVALHGAFGLIGFMLRQFELARSVQLRPYNAIAFSAPIAVFVSVFLIYPLGQSGWFFAPSFGVAAIFRFILFFQGFHNWTLNPFHMMGVAGVLGAALLCAIHGATVENTLFEDGDGANTFRAFNPTQAEETYSMVTANRFWSQIFGVAFSNKRWLHFFMLFVPVTGLWMSAIGVVGLALNLRAYDFVSQEIRAAEDPESETFYTKNILLNEGIRAWMAAQDQPHENLIFPEEVLPRGNAL.

At Thr2 the chain carries N-acetylthreonine. A Phosphothreonine modification is found at Thr2. Residues 41 to 61 (CAYFALGGWFTGTTFVTSWYT) form a helical membrane-spanning segment. His118 serves as a coordination point for chlorophyll a. A helical transmembrane segment spans residues 125-141 (GFMLRQFELARSVQLRP). Residues Gln130 and Asn143 each coordinate pheophytin a. The helical transmembrane segment at 153-166 (VFVSVFLIYPLGQS) threads the bilayer. Chlorophyll a is bound at residue His198. A helical membrane pass occupies residues 208-228 (AALLCAIHGATVENTLFEDGD). A plastoquinone contacts are provided by His215 and Phe262. Residue His215 coordinates Fe cation. His269 serves as a coordination point for Fe cation. A helical transmembrane segment spans residues 279–295 (GLWMSAIGVVGLALNLR).

It belongs to the reaction center PufL/M/PsbA/D family. In terms of assembly, PSII is composed of 1 copy each of membrane proteins PsbA, PsbB, PsbC, PsbD, PsbE, PsbF, PsbH, PsbI, PsbJ, PsbK, PsbL, PsbM, PsbT, PsbX, PsbY, PsbZ, Psb30/Ycf12, at least 3 peripheral proteins of the oxygen-evolving complex and a large number of cofactors. It forms dimeric complexes. Requires The D1/D2 heterodimer binds P680, chlorophylls that are the primary electron donor of PSII, and subsequent electron acceptors. It shares a non-heme iron and each subunit binds pheophytin, quinone, additional chlorophylls, carotenoids and lipids. There is also a Cl(-1) ion associated with D1 and D2, which is required for oxygen evolution. The PSII complex binds additional chlorophylls, carotenoids and specific lipids. as cofactor.

It is found in the plastid. The protein localises to the chloroplast thylakoid membrane. It catalyses the reaction 2 a plastoquinone + 4 hnu + 2 H2O = 2 a plastoquinol + O2. In terms of biological role, photosystem II (PSII) is a light-driven water:plastoquinone oxidoreductase that uses light energy to abstract electrons from H(2)O, generating O(2) and a proton gradient subsequently used for ATP formation. It consists of a core antenna complex that captures photons, and an electron transfer chain that converts photonic excitation into a charge separation. The D1/D2 (PsbA/PsbD) reaction center heterodimer binds P680, the primary electron donor of PSII as well as several subsequent electron acceptors. D2 is needed for assembly of a stable PSII complex. This chain is Photosystem II D2 protein, found in Pinus thunbergii (Japanese black pine).